A 785-amino-acid chain; its full sequence is MSRVLWTLWVLGAVTNLSKEEAPDQSSSLSCDPTGVCDGRSRSLNSMPSGLTAAVRSLDLSNNEITYIGNSDLRDCVNLKALRLESNGINTIEEESFLSLWSLEHLDLSYNLLSNLSSSWFRPLSSLKFLNLLGNPYKSLGETPLFSQLTNLRILKVGNIYSFTEIQDKDFAGLTFLEELEIDASNLQRYEPKSLKSIQNISYLALRMKQPVLLVEIFVDLSSSLKHLELRDTHLDTFHFSEASINETHTLVKKWTFRNVKVTDRSFTGVVRLLNYVSGVLEVEFEDCTLYGLGDFDIPDVDKIKNIGQIETLTVRRLHIPHFYSFYDMSSIYSLTEDVKRITVENSKVFLVPCLLSQHLKSLEYLDLSENLMVEEYLKNSACEDAWPSLQTLVLRQNHLASLERTGETLLTLKNLTNIDISKNSFHSMPETCQWPEKMKYLNLSSTRIHSVTGCIPKTLEILDVSNNNLNLFSLNLPQLKELYISRNKLMTLPDASLLPMLLVLKISRNAITTFSKEQLDSFHTLKTLEAGGNNFICSCEFLSFTQEQQALAKVLIDWPANYLCDSPSHVRGQQVQDVRLSVSECHRTALVSGMCCALFLLILLTEVLCHRFHGLWYMRMMWAWLQAKRKPRKAPSRDVCYDAFVSYSEHDSYWVENLLVQKLEHFNPPFKLCLHKRDFIPGKWIIDNIIDSIEKSRKTIFVLSENFVKSEWCKYELDFSHFRLFDENSDAAILILLEPIEKKAIPQRFCKLRKIMNTKTYLEWPTDDAQQEGFWLNLRTAIKS.

Residues 1 to 17 (MSRVLWTLWVLGAVTNL) form the signal peptide. The Extracellular portion of the chain corresponds to 18–589 (SKEEAPDQSS…RLSVSECHRT (572 aa)). A disulfide bridge connects residues Cys31 and Cys37. 19 LRR repeats span residues 54–77 (AVRSLDLSNNEITYIGNSDLRDCV), 78–101 (NLKALRLESNGINTIEEESFLSLW), 102–125 (SLEHLDLSYNLLSNLSSSWFRPLS), 126–150 (SLKFLNLLGNPYKSLGETPLFSQLT), 151–175 (NLRILKVGNIYSFTEIQDKDFAGLT), 176–199 (FLEELEIDASNLQRYEPKSLKSIQ), 200–223 (NISYLALRMKQPVLLVEIFVDLSS), 224–250 (SLKHLELRDTHLDTFHFSEASINETHT), 251–278 (LVKKWTFRNVKVTDRSFTGVVRLLNYVS), 279–308 (GVLEVEFEDCTLYGLGDFDIPDVDKIKNIG), 309–337 (QIETLTVRRLHIPHFYSFYDMSSIYSLTE), 338–361 (DVKRITVENSKVFLVPCLLSQHLK), 362–388 (SLEYLDLSENLMVEEYLKNSACEDAWP), 389–414 (SLQTLVLRQNHLASLERTGETLLTLK), 415–437 (NLTNIDISKNSFHSMPETCQWPE), 438–457 (KMKYLNLSSTRIHSVTGCIP), 458–478 (KTLEILDVSNNNLNLFSLNLP), 479–500 (QLKELYISRNKLMTLPDASLLP), and 501–524 (MLLVLKISRNAITTFSKEQLDSFH). The N-linked (GlcNAc...) asparagine glycan is linked to Asn115. N-linked (GlcNAc...) asparagine glycosylation is found at Asn200 and Asn246. A disulfide bridge connects residues Cys354 and Cys383. N-linked (GlcNAc...) asparagine glycans are attached at residues Asn415 and Asn443. Cys433 and Cys455 are disulfide-bonded. The region spanning 525–579 (TLKTLEAGGNNFICSCEFLSFTQEQQALAKVLIDWPANYLCDSPSHVRGQQVQDV) is the LRRCT domain. The helical transmembrane segment at 590-610 (ALVSGMCCALFLLILLTEVLC) threads the bilayer. Over 611 to 785 (HRFHGLWYMR…WLNLRTAIKS (175 aa)) the chain is Cytoplasmic. In terms of domain architecture, TIR spans 640-783 (VCYDAFVSYS…GFWLNLRTAI (144 aa)). Lys755 is covalently cross-linked (Glycyl lysine isopeptide (Lys-Gly) (interchain with G-Cter in ubiquitin)). Residues 762 to 779 (YLEWPTDDAQQEGFWLNL) carry the ATG16L1-binding motif motif.

It belongs to the Toll-like receptor family. As to quaternary structure, interacts with LY96, TLR1 and TLR6 (via extracellular domain). TLR2 seems to exist in heterodimers with either TLR1 or TLR6 before stimulation by the ligand. The heterodimers form bigger oligomers in response to their corresponding ligands as well as further heterotypic associations with other receptors such as CD14 and/or CD36. Binds MYD88 (via TIR domain). Interacts with TICAM1. Interacts with CNPY3. Interacts with ATG16L1. Interacts with PPP1R11. Interacts with TICAM2. Interacts with TIRAP. Post-translationally, ubiquitinated at Lys-755 by PPP1R11, leading to its degradation. Deubiquitinated by USP2. In terms of processing, glycosylation of Asn-443 is critical for secretion of the N-terminal ectodomain of TLR2.

It is found in the membrane. Its subcellular location is the cytoplasmic vesicle. The protein resides in the phagosome membrane. It localises to the membrane raft. In terms of biological role, cooperates with LY96 to mediate the innate immune response to bacterial lipoproteins and other microbial cell wall components. Cooperates with TLR1 or TLR6 to mediate the innate immune response to bacterial lipoproteins or lipopeptides. Acts via MYD88 and TRAF6, leading to NF-kappa-B activation, cytokine secretion and the inflammatory response. May also promote apoptosis in response to lipoproteins. Forms activation clusters composed of several receptors depending on the ligand, these clusters trigger signaling from the cell surface and subsequently are targeted to the Golgi in a lipid-raft dependent pathway. Forms the cluster TLR2:TLR6:CD14:CD36 in response to diacylated lipopeptides and TLR2:TLR1:CD14 in response to triacylated lipopeptides. This is Toll-like receptor 2 (TLR2) from Canis lupus familiaris (Dog).